The chain runs to 299 residues: MASEDQSAARSTGKVNWFNASKGYGFITPDDGSVELFVHQSSIVSEGYRSLTVGDAVEFAITQGSDGKTKAVNVTAPGGGSLKKENNSRGNGARRGGGGSGCYNCGELGHISKDCGIGGGGGGGERRSRGGEGCYNCGDTGHFARDCTSAGNGDQRGATKGGNDGCYTCGDVGHVARDCTQKSVGNGDQRGAVKGGNDGCYTCGDVGHFARDCTQKVAAGNVRSGGGGSGTCYSCGGVGHIARDCATKRQPSRGCYQCGGSGHLARDCDQRGSGGGGNDNACYKCGKEGHFARECSSVA.

A2 carries the post-translational modification N-acetylalanine. The CSD domain occupies 12–76; it reads TGKVNWFNAS…GKTKAVNVTA (65 aa). Positions 76 to 97 are disordered; sequence APGGGSLKKENNSRGNGARRGG. 7 CCHC-type zinc fingers span residues 100–117, 132–149, 164–181, 198–215, 230–247, 253–270, and 280–297; these read SGCY…DCGI, EGCY…DCTS, DGCY…DCTQ, GTCY…DCAT, RGCY…DCDQ, and NACY…ECSS.

The protein belongs to the cold shock protein (CSP) family. In terms of tissue distribution, mostly expressed in shoot apices and siliques, and, to a lower extent, in roots, cotyledons, stems, shoots, leaves, floral buds and flowers.

The protein resides in the nucleus. Its subcellular location is the cytoplasm. Its function is as follows. Chaperone that binds to RNA, single- (ssDNA) and double-stranded (dsDNA) DNA, and unwinds nucleic acid duplex. Exhibits a DNA melting activity. May be involved in cold resistance. Prevents seed germination under dehydration or salt stress conditions. The protein is Cold shock protein 1 (CSP1) of Arabidopsis thaliana (Mouse-ear cress).